A 308-amino-acid polypeptide reads, in one-letter code: UPF0026 protein jhp_0109 (308 aa).

One can recognise a Radical SAM core domain in the interval 18–247 (FGKSLGVDLS…VSLPKRSTAQ (230 aa)). The [4Fe-4S] cluster site is built by Cys33, Cys37, and Cys40.

The protein belongs to the UPF0026 family. Requires [4Fe-4S] cluster as cofactor.

In Helicobacter pylori (strain J99 / ATCC 700824) (Campylobacter pylori J99), this protein is UPF0026 protein jhp_0109.